The primary structure comprises 334 residues: B1 bradykinin receptor (334 aa).

The tract at residues 1–21 is disordered; that stretch reads MASQASLKLQPSNQSQQAPPN. Residues 1–41 lie on the Extracellular side of the membrane; the sequence is MASQASLKLQPSNQSQQAPPNITSCEGAPEAWDLLCRVLPG. The segment covering 10 to 21 has biased composition (low complexity); that stretch reads QPSNQSQQAPPN. Asn13 and Asn21 each carry an N-linked (GlcNAc...) asparagine glycan. Residues 42-62 traverse the membrane as a helical segment; sequence FVITVCFFGLLGNLLVLSFFL. Residues 63-80 lie on the Cytoplasmic side of the membrane; it reads LPWRRWWQQRRQRLTIAE. The helical transmembrane segment at 81–101 threads the bilayer; sequence IYLANLAASDLVFVLGLPFWA. Over 102–118 the chain is Extracellular; it reads ENVGNRFNWPFGSDLCR. Cys117 and Cys196 form a disulfide bridge. Residues 119–139 form a helical membrane-spanning segment; the sequence is VVSGVIKANLFISIFLVVAIS. Residues 140–161 are Cytoplasmic-facing; that stretch reads QDRYRLLVYPMTSWGNRRRRQA. Residues 162 to 182 traverse the membrane as a helical segment; the sequence is QVTCLLIWVAGGLLSTPTFLL. Topologically, residues 183-214 are extracellular; sequence RSVKVVPDLNISACILLFPHEAWHFVRMVELN. Asn192 is a glycosylation site (N-linked (GlcNAc...) asparagine). The helical transmembrane segment at 215-235 threads the bilayer; the sequence is VLGFLLPLAAILYFNFHILAS. Residues 236 to 258 are Cytoplasmic-facing; that stretch reads LRGQKEASRTRCGGPKDSKTMGL. A helical transmembrane segment spans residues 259–279; that stretch reads ILTLVASFLVCWAPYHFFAFL. The Extracellular segment spans residues 280–302; the sequence is DFLVQVRVIQDCFWKELTDLGLQ. A helical membrane pass occupies residues 303–323; sequence LANFFAFVNSCLNPLIYVFAG. The Cytoplasmic portion of the chain corresponds to 324 to 334; that stretch reads RLFKTRVLGTL.

This sequence belongs to the G-protein coupled receptor 1 family. Bradykinin receptor subfamily. BDKRB1 sub-subfamily. In terms of tissue distribution, expressed in heart, liver and lung.

It is found in the cell membrane. In terms of biological role, this is a receptor for bradykinin. Could be a factor in chronic pain and inflammation. This Mus musculus (Mouse) protein is B1 bradykinin receptor (Bdkrb1).